A 72-amino-acid polypeptide reads, in one-letter code: DNA-directed RNA polymerase subunit omega (72 aa).

This sequence belongs to the RNA polymerase subunit omega family. In terms of assembly, the RNAP catalytic core consists of 2 alpha, 1 beta, 1 beta' and 1 omega subunit. When a sigma factor is associated with the core the holoenzyme is formed, which can initiate transcription.

The catalysed reaction is RNA(n) + a ribonucleoside 5'-triphosphate = RNA(n+1) + diphosphate. Its function is as follows. Promotes RNA polymerase assembly. Latches the N- and C-terminal regions of the beta' subunit thereby facilitating its interaction with the beta and alpha subunits. The polypeptide is DNA-directed RNA polymerase subunit omega (Francisella philomiragia subsp. philomiragia (strain ATCC 25017 / CCUG 19701 / FSC 153 / O#319-036)).